We begin with the raw amino-acid sequence, 631 residues long: Phosphomethylpyrimidine synthase (631 aa).

Residues Asn-239, Met-268, Tyr-297, His-333, 353–355, 394–397, and Glu-433 contribute to the substrate site; these read SRG and DGLR. Residue His-437 coordinates Zn(2+). Residue Tyr-460 coordinates substrate. His-501 is a binding site for Zn(2+). Cys-581, Cys-584, and Cys-589 together coordinate [4Fe-4S] cluster.

This sequence belongs to the ThiC family. Homodimer. It depends on [4Fe-4S] cluster as a cofactor.

The catalysed reaction is 5-amino-1-(5-phospho-beta-D-ribosyl)imidazole + S-adenosyl-L-methionine = 4-amino-2-methyl-5-(phosphooxymethyl)pyrimidine + CO + 5'-deoxyadenosine + formate + L-methionine + 3 H(+). It functions in the pathway cofactor biosynthesis; thiamine diphosphate biosynthesis. Its function is as follows. Catalyzes the synthesis of the hydroxymethylpyrimidine phosphate (HMP-P) moiety of thiamine from aminoimidazole ribotide (AIR) in a radical S-adenosyl-L-methionine (SAM)-dependent reaction. The sequence is that of Phosphomethylpyrimidine synthase from Escherichia fergusonii (strain ATCC 35469 / DSM 13698 / CCUG 18766 / IAM 14443 / JCM 21226 / LMG 7866 / NBRC 102419 / NCTC 12128 / CDC 0568-73).